We begin with the raw amino-acid sequence, 447 residues long: Tubulin beta-5 chain (447 aa).

Residues Gln11, Glu69, Ser138, Gly142, Thr143, Gly144, Asn204, and Asn226 each coordinate GTP. Residue Glu69 coordinates Mg(2+).

This sequence belongs to the tubulin family. In terms of assembly, dimer of alpha and beta chains. A typical microtubule is a hollow water-filled tube with an outer diameter of 25 nm and an inner diameter of 15 nM. Alpha-beta heterodimers associate head-to-tail to form protofilaments running lengthwise along the microtubule wall with the beta-tubulin subunit facing the microtubule plus end conferring a structural polarity. Microtubules usually have 13 protofilaments but different protofilament numbers can be found in some organisms and specialized cells. Mg(2+) serves as cofactor.

It localises to the cytoplasm. The protein localises to the cytoskeleton. Functionally, tubulin is the major constituent of microtubules, a cylinder consisting of laterally associated linear protofilaments composed of alpha- and beta-tubulin heterodimers. Microtubules grow by the addition of GTP-tubulin dimers to the microtubule end, where a stabilizing cap forms. Below the cap, tubulin dimers are in GDP-bound state, owing to GTPase activity of alpha-tubulin. The chain is Tubulin beta-5 chain (TUBB5) from Triticum aestivum (Wheat).